The following is a 371-amino-acid chain: Chaperone protein DnaJ (371 aa).

Residues 5–70 (SYYDILGVSK…KKRQAYDQFG (66 aa)) form the J domain. Residues 139–217 (GREYKIEIPR…CGGQGLQEKR (79 aa)) form a CR-type zinc finger. Zn(2+) is bound by residues C152, C155, C169, C172, C191, C194, C205, and C208. 4 CXXCXGXG motif repeats span residues 152 to 159 (CGDCNGSG), 169 to 176 (CPDCGGSG), 191 to 198 (CPTCRGKG), and 205 to 212 (CKTCGGQG).

This sequence belongs to the DnaJ family. As to quaternary structure, homodimer. It depends on Zn(2+) as a cofactor.

Its subcellular location is the cytoplasm. Its function is as follows. Participates actively in the response to hyperosmotic and heat shock by preventing the aggregation of stress-denatured proteins and by disaggregating proteins, also in an autonomous, DnaK-independent fashion. Unfolded proteins bind initially to DnaJ; upon interaction with the DnaJ-bound protein, DnaK hydrolyzes its bound ATP, resulting in the formation of a stable complex. GrpE releases ADP from DnaK; ATP binding to DnaK triggers the release of the substrate protein, thus completing the reaction cycle. Several rounds of ATP-dependent interactions between DnaJ, DnaK and GrpE are required for fully efficient folding. Also involved, together with DnaK and GrpE, in the DNA replication of plasmids through activation of initiation proteins. This Leptospira borgpetersenii serovar Hardjo-bovis (strain JB197) protein is Chaperone protein DnaJ.